A 523-amino-acid polypeptide reads, in one-letter code: Cytochrome P450 monooxygenase ple5B (523 aa).

The chain crosses the membrane as a helical span at residues 16 to 33; the sequence is IAAAAAGSAVAVYKLLQL. Residues Asn82, Asn103, Asn122, Asn295, Asn379, and Asn423 are each glycosylated (N-linked (GlcNAc...) asparagine). Cys446 is a binding site for heme.

Belongs to the cytochrome P450 family. Heme is required as a cofactor.

It is found in the membrane. It participates in secondary metabolite biosynthesis; terpenoid biosynthesis. Cytochrome P450 monooxygenase; part of the gene cluster that mediates the biosynthesis of pleuromutilin, a tricyclic diterpene showing antibacterial properties. The geranylgeranyl diphosphate (GGPP) synthase ple4 catalyzes the first step in pleuromutilin biosynthesis. GGPP is then substrate of the premutilin synthase (PS) ple3 to yield premutilin. Premutilin synthase is a bifunctional enzyme composed of the fusion of a class II diterpene cyclase (DTC) and a class I diterpene synthase (DTS), with the corresponding domains and active sites containing characteristic aspartate-rich motifs. GGPP is first converted to mutildienyl-diphosphate (MPP) at the class II DTC site. MPP is subsequently further cyclized at the class I DTS site, followed by a 1,5-hydride shift and addition of water prior to terminating deprotonation, to yield premutilin. The cytochrome P450 monooxygenases ple5 and ple6 hydroxylate premutilin at C-11 and C-3, respectively, producing 11-hydroxypremutilin and 3-hydroxypremutilin. The combination of the actions of both ple5 and ple6 leads to the production of 3,11-dihydroxypremutilin. The short chain dehydrogenase ple7 further converts 3,11-dihydroxypremutilin into mutilin. The acetyltransferase ple2 then acetylates mutilin to produce 14-O-acetylmutilin. Finally, the cytochrome P450 monooxygenase ple1 catalyzes hydroxylation on the alpha position of the acetyl side chain of 14-O-acetylmutilin to yield pleuromutilin. This Rhodocybe pseudopiperita (Clitopilus pseudopiperitus) protein is Cytochrome P450 monooxygenase ple5B.